The following is a 302-amino-acid chain: Ribosomal RNA small subunit methyltransferase H (302 aa).

S-adenosyl-L-methionine-binding positions include 32–34 (GGH), D51, F78, D97, and Q104.

This sequence belongs to the methyltransferase superfamily. RsmH family.

The protein resides in the cytoplasm. The catalysed reaction is cytidine(1402) in 16S rRNA + S-adenosyl-L-methionine = N(4)-methylcytidine(1402) in 16S rRNA + S-adenosyl-L-homocysteine + H(+). Functionally, specifically methylates the N4 position of cytidine in position 1402 (C1402) of 16S rRNA. This chain is Ribosomal RNA small subunit methyltransferase H, found in Nitratiruptor sp. (strain SB155-2).